The primary structure comprises 252 residues: Imidazole glycerol phosphate synthase subunit HisF (252 aa).

Residues D11 and D130 contribute to the active site.

This sequence belongs to the HisA/HisF family. As to quaternary structure, heterodimer of HisH and HisF.

Its subcellular location is the cytoplasm. It catalyses the reaction 5-[(5-phospho-1-deoxy-D-ribulos-1-ylimino)methylamino]-1-(5-phospho-beta-D-ribosyl)imidazole-4-carboxamide + L-glutamine = D-erythro-1-(imidazol-4-yl)glycerol 3-phosphate + 5-amino-1-(5-phospho-beta-D-ribosyl)imidazole-4-carboxamide + L-glutamate + H(+). Its pathway is amino-acid biosynthesis; L-histidine biosynthesis; L-histidine from 5-phospho-alpha-D-ribose 1-diphosphate: step 5/9. Functionally, IGPS catalyzes the conversion of PRFAR and glutamine to IGP, AICAR and glutamate. The HisF subunit catalyzes the cyclization activity that produces IGP and AICAR from PRFAR using the ammonia provided by the HisH subunit. This is Imidazole glycerol phosphate synthase subunit HisF from Bacillus pumilus (strain SAFR-032).